We begin with the raw amino-acid sequence, 167 residues long: Ureidoglycolate lyase (167 aa).

The protein belongs to the ureidoglycolate lyase family. Homodimer. It depends on Ni(2+) as a cofactor.

It carries out the reaction (S)-ureidoglycolate = urea + glyoxylate. Its pathway is nitrogen metabolism; (S)-allantoin degradation. Functionally, catalyzes the catabolism of the allantoin degradation intermediate (S)-ureidoglycolate, generating urea and glyoxylate. Involved in the utilization of allantoin as nitrogen source. In Pseudomonas fluorescens (strain ATCC BAA-477 / NRRL B-23932 / Pf-5), this protein is Ureidoglycolate lyase.